The sequence spans 194 residues: Probable GTP-binding protein EngB (194 aa).

Positions 23-194 (LNGEFVFVGR…YELIEIFGGV (172 aa)) constitute an EngB-type G domain. Residues 31-38 (GRSNVGKS), 57-61 (GKTAS), 75-78 (DLPG), 143-146 (TKMD), and 173-175 (YSA) each bind GTP. Mg(2+)-binding residues include S38 and T59.

It belongs to the TRAFAC class TrmE-Era-EngA-EngB-Septin-like GTPase superfamily. EngB GTPase family. The cofactor is Mg(2+).

Its function is as follows. Necessary for normal cell division and for the maintenance of normal septation. In Thermosipho africanus (strain TCF52B), this protein is Probable GTP-binding protein EngB.